The primary structure comprises 360 residues: Phosphoserine aminotransferase (360 aa).

Arginine 41 contributes to the L-glutamate binding site. Residues tryptophan 101, threonine 152, aspartate 172, and glutamine 195 each contribute to the pyridoxal 5'-phosphate site. Position 196 is an N6-(pyridoxal phosphate)lysine (lysine 196). 237-238 (NT) contacts pyridoxal 5'-phosphate.

The protein belongs to the class-V pyridoxal-phosphate-dependent aminotransferase family. SerC subfamily. As to quaternary structure, homodimer. The cofactor is pyridoxal 5'-phosphate.

It is found in the cytoplasm. It catalyses the reaction O-phospho-L-serine + 2-oxoglutarate = 3-phosphooxypyruvate + L-glutamate. The catalysed reaction is 4-(phosphooxy)-L-threonine + 2-oxoglutarate = (R)-3-hydroxy-2-oxo-4-phosphooxybutanoate + L-glutamate. It participates in amino-acid biosynthesis; L-serine biosynthesis; L-serine from 3-phospho-D-glycerate: step 2/3. Its pathway is cofactor biosynthesis; pyridoxine 5'-phosphate biosynthesis; pyridoxine 5'-phosphate from D-erythrose 4-phosphate: step 3/5. Catalyzes the reversible conversion of 3-phosphohydroxypyruvate to phosphoserine and of 3-hydroxy-2-oxo-4-phosphonooxybutanoate to phosphohydroxythreonine. The chain is Phosphoserine aminotransferase from Burkholderia multivorans (strain ATCC 17616 / 249).